A 232-amino-acid polypeptide reads, in one-letter code: Ion-translocating oxidoreductase complex subunit E (232 aa).

6 helical membrane passes run 18–38 (GLVQ…LTNA), 39–59 (LGLG…VSLV), 69–89 (IPVF…LINA), 93–113 (GLYL…IIIG), 127–147 (AAFD…VLGA), and 182–202 (PFLL…LIAL).

The protein belongs to the NqrDE/RnfAE family. In terms of assembly, the complex is composed of six subunits: RnfA, RnfB, RnfC, RnfD, RnfE and RnfG.

It localises to the cell inner membrane. Part of a membrane-bound complex that couples electron transfer with translocation of ions across the membrane. The protein is Ion-translocating oxidoreductase complex subunit E of Shewanella sp. (strain ANA-3).